Reading from the N-terminus, the 773-residue chain is Probable C-mannosyltransferase DPY19L2 (773 aa).

A disordered region spans residues 1-45 (MVGPTRSKLREGSSDRPQSSCTGQARRRWSAATMEPQQERSAPQE). The Nuclear segment spans residues 1–122 (MVGPTRSKLR…ALQMHRFSHR (122 aa)). Residues 123–143 (TLFGLAIFVGILHWLHLITLF) form a helical membrane-spanning segment. At 144-209 (ENDHHFSHLS…INTVKRFHLY (66 aa)) the chain is on the perinuclear space side. Residues 210 to 230 (PEVVIAYWYRTIIGIMNLFGI) traverse the membrane as a helical segment. Over 231-256 (ETKTCWNVTRMEPLNEVQSCEGLGDP) the chain is Nuclear. A helical membrane pass occupies residues 257–277 (ACFYIGVIFILNGLMMGLFFI). Over 278-311 (YSTYLSGSQLGGLITVACYFFNHGEATRVMWTPP) the chain is Perinuclear space. Residues 312–332 (LRESFSYPFLVLQMYILTIIL) traverse the membrane as a helical segment. The Nuclear segment spans residues 333–358 (RTSTVHKKHYMALCFSNVAFMLPWQF). A helical transmembrane segment spans residues 359 to 379 (AQFILFTQIASLFPMYVVGYI). The Perinuclear space segment spans residues 380-386 (EPSKFQK). The helical transmembrane segment at 387–407 (IIYVNMSSVALCFILMFGNSM) threads the bilayer. The Nuclear portion of the chain corresponds to 408 to 437 (YLSSYYSSCLLVTWAIMQKKSKIQKLGGTE). Residues 438–458 (LQFWLIQGCFWWCGTIILKFL) form a helical membrane-spanning segment. Over 459 to 507 (TSKICGVSDHIRLSDLIAARILRYTDFDTLIYTCAPEFDFMEQATPLRY) the chain is Perinuclear space. Residues 508–528 (IKTLLLPLILVITYLIFKKIV) traverse the membrane as a helical segment. Residues 529–548 (RDIMCVLYTNTYVRKQLLDN) are Nuclear-facing. Residues 549 to 569 (AELIFHTLQLLAFTGLAILIM) traverse the membrane as a helical segment. Residues 570–590 (RLKLFLTPHMCIMASLICSQR) are Perinuclear space-facing. The chain crosses the membrane as a helical span at residues 591 to 611 (LFGWLFCRIHFENVVFGILTM). At 612-773 (MSIQGCANLH…NSMYRVLKIN (162 aa)) the chain is on the nuclear side.

The protein belongs to the dpy-19 family. In terms of assembly, interacts with FAM209. In terms of tissue distribution, predominantly expressed in testis. Present in testis but absent from epididymal sperm (at protein level).

It localises to the nucleus inner membrane. In terms of biological role, probable C-mannosyltransferase that mediates C-mannosylation of tryptophan residues on target proteins. Functionally, required during spermatogenesis for sperm head elongation and acrosome formation. Also plays a role in acrosome attachment to the nuclear envelope. This is Probable C-mannosyltransferase DPY19L2 (Dpy19l2) from Mus musculus (Mouse).